The chain runs to 623 residues: uncharacterized protein (623 aa).

5 helical membrane passes run 242–262, 288–308, 318–338, 361–381, and 387–407; these read IALA…ITWL, IVSP…LDIF, VSMW…IALF, VINL…LLGV, and FNVS…ALAV.

The protein belongs to the MscS (TC 1.A.23) family.

The protein localises to the cell membrane. This is an uncharacterized protein from Helicobacter pylori (strain J99 / ATCC 700824) (Campylobacter pylori J99).